The chain runs to 367 residues: DNA replication and repair protein RecF (367 aa).

30 to 37 serves as a coordination point for ATP; the sequence is GNNGEGKT.

It belongs to the RecF family.

The protein localises to the cytoplasm. Functionally, the RecF protein is involved in DNA metabolism; it is required for DNA replication and normal SOS inducibility. RecF binds preferentially to single-stranded, linear DNA. It also seems to bind ATP. The polypeptide is DNA replication and repair protein RecF (Leptospira biflexa serovar Patoc (strain Patoc 1 / Ames)).